The chain runs to 525 residues: D-aminopeptidase (525 aa).

The active-site Nucleophile is Ser62. Lys65 (proton donor/acceptor) is an active-site residue. The interval Pro485–Asp495 is important for specificity. Asp489 contacts substrate.

The protein belongs to the peptidase S12 family. Homodimer.

The catalysed reaction is Release of an N-terminal D-amino acid from a peptide, Xaa-|-Yaa-, in which Xaa is preferably D-Ala, D-Ser or D-Thr. D-amino acid amides and methyl esters also are hydrolyzed, as is glycine amide.. Inhibited by beta-lactam compounds such as 6-aminopenicillic acid, 7-aminocephalosporanic acid, benzylpenicillin and ampicillin. Inhibited by p-chloromercuribenzoate. Its function is as follows. Hydrolyzes N-terminal residues in D-amino acid-containing peptides. This is D-aminopeptidase from Gluconobacter oxydans (strain 621H) (Gluconobacter suboxydans).